Reading from the N-terminus, the 658-residue chain is Phosphomethylpyrimidine synthase (658 aa).

The disordered stretch occupies residues 1–22 (MNNSTDAVNPAKKPQTRREKRE). Residues asparagine 248, methionine 277, tyrosine 306, histidine 342, 362–364 (SRG), 403–406 (DGLR), and glutamate 442 contribute to the substrate site. A Zn(2+)-binding site is contributed by histidine 446. Tyrosine 469 contributes to the substrate binding site. Histidine 510 is a binding site for Zn(2+). The [4Fe-4S] cluster site is built by cysteine 590, cysteine 593, and cysteine 598.

The protein belongs to the ThiC family. Homodimer. The cofactor is [4Fe-4S] cluster.

The catalysed reaction is 5-amino-1-(5-phospho-beta-D-ribosyl)imidazole + S-adenosyl-L-methionine = 4-amino-2-methyl-5-(phosphooxymethyl)pyrimidine + CO + 5'-deoxyadenosine + formate + L-methionine + 3 H(+). The protein operates within cofactor biosynthesis; thiamine diphosphate biosynthesis. In terms of biological role, catalyzes the synthesis of the hydroxymethylpyrimidine phosphate (HMP-P) moiety of thiamine from aminoimidazole ribotide (AIR) in a radical S-adenosyl-L-methionine (SAM)-dependent reaction. The sequence is that of Phosphomethylpyrimidine synthase from Colwellia psychrerythraea (strain 34H / ATCC BAA-681) (Vibrio psychroerythus).